The following is a 587-amino-acid chain: Envelope glycoprotein (587 aa).

The first 22 residues, 1-22, serve as a signal peptide directing secretion; that stretch reads MNFNHHFTWSLVIISQIFQVQA. Topologically, residues 23–527 are extracellular; that stretch reads GFGDPREALL…TGFHGLLPYV (505 aa). N120 and N237 each carry an N-linked (GlcNAc...) asparagine; by host glycan. A CXXC motif is present at residues 248-251; that stretch reads CWLC. Intrachain disulfides connect C248/C251, C248/C484, and C476/C483. N-linked (GlcNAc...) asparagine; by host glycans are attached at residues N266, N271, N277, N280, N295, N308, N322, N328, N340, and N358. The tract at residues 399 to 419 is fusion peptide; it reads FIPLVIGLGITTAVSTGTAGL. 2 coiled-coil regions span residues 420–470 and 480–516; these read GVSL…LLTA and QEKC…DNPF. An immunosuppression region spans residues 459-475; it reads LQNRRGLDLLTAEQGGI. The short motif at 476-484 is the CX6CC element; sequence CLALQEKCC. N-linked (GlcNAc...) asparagine; by host glycosylation occurs at N488. A helical membrane pass occupies residues 528–548; sequence MPLLGPLLCLLLVLSFGPIIF. Residues 549 to 587 are Cytoplasmic-facing; the sequence is NKLMTFIKHQIESIQAKPIQVHYHRLEQEDHGGSYLNLT. The YXXL motif; contains endocytosis signal motif lies at 571-574; it reads YHRL.

In terms of assembly, the mature envelope protein (Env) consists of a trimer of SU-TM heterodimers attached by a labile interchain disulfide bond. In terms of processing, specific enzymatic cleavages in vivo yield mature proteins. Envelope glycoproteins are synthesized as an inactive precursor that is N-glycosylated and processed likely by host cell furin or by a furin-like protease in the Golgi to yield the mature SU and TM proteins. The cleavage site between SU and TM requires the minimal sequence [KR]-X-[KR]-R. The R-peptide is released from the C-terminus of the cytoplasmic tail of the TM protein upon particle formation as a result of proteolytic cleavage by the viral protease. Cleavage of this peptide is required for TM to become fusogenic. The CXXC motif is highly conserved across a broad range of retroviral envelope proteins. It is thought to participate in the formation of a labile disulfide bond possibly with the CX6CC motif present in the transmembrane protein. Isomerization of the intersubunit disulfide bond to an SU intrachain disulfide bond is thought to occur upon receptor recognition in order to allow membrane fusion.

The protein localises to the virion membrane. The protein resides in the host cell membrane. The surface protein (SU) attaches the virus to the host cell by binding to its receptor. This interaction triggers the refolding of the transmembrane protein (TM) and is thought to activate its fusogenic potential by unmasking its fusion peptide. Fusion occurs at the host cell plasma membrane. Functionally, the transmembrane protein (TM) acts as a class I viral fusion protein. Under the current model, the protein has at least 3 conformational states: pre-fusion native state, pre-hairpin intermediate state, and post-fusion hairpin state. During viral and target cell membrane fusion, the coiled coil regions (heptad repeats) assume a trimer-of-hairpins structure, positioning the fusion peptide in close proximity to the C-terminal region of the ectodomain. The formation of this structure appears to drive apposition and subsequent fusion of viral and target cell membranes. Membranes fusion leads to delivery of the nucleocapsid into the cytoplasm. The sequence is that of Envelope glycoprotein (env) from Simian retrovirus SRV-1.